The sequence spans 128 residues: MPTIQQLIRRGRTTKASKTASPALEKCPQKRGVCTRVYTTTPKKPNSALRKVARVRLSNKIEVTAYIPGEGHNLQEHSIVLIRGGRVKDLPGVRYHIVRGSLDTSGVADRRQGRSKYGAKRPKGAAAK.

D89 carries the post-translational modification 3-methylthioaspartic acid. A disordered region spans residues 101–128 (SLDTSGVADRRQGRSKYGAKRPKGAAAK). Over residues 113 to 128 (GRSKYGAKRPKGAAAK) the composition is skewed to basic residues.

This sequence belongs to the universal ribosomal protein uS12 family. As to quaternary structure, part of the 30S ribosomal subunit. Contacts proteins S8 and S17. May interact with IF1 in the 30S initiation complex.

Its function is as follows. With S4 and S5 plays an important role in translational accuracy. In terms of biological role, interacts with and stabilizes bases of the 16S rRNA that are involved in tRNA selection in the A site and with the mRNA backbone. Located at the interface of the 30S and 50S subunits, it traverses the body of the 30S subunit contacting proteins on the other side and probably holding the rRNA structure together. The combined cluster of proteins S8, S12 and S17 appears to hold together the shoulder and platform of the 30S subunit. This chain is Small ribosomal subunit protein uS12, found in Prosthecochloris aestuarii (strain DSM 271 / SK 413).